The following is a 141-amino-acid chain: 3-hydroxyacyl-[acyl-carrier-protein] dehydratase FabZ (141 aa).

H48 is a catalytic residue.

This sequence belongs to the thioester dehydratase family. FabZ subfamily.

The protein resides in the cytoplasm. The enzyme catalyses a (3R)-hydroxyacyl-[ACP] = a (2E)-enoyl-[ACP] + H2O. Its function is as follows. Involved in unsaturated fatty acids biosynthesis. Catalyzes the dehydration of short chain beta-hydroxyacyl-ACPs and long chain saturated and unsaturated beta-hydroxyacyl-ACPs. In Bacillus subtilis (strain 168), this protein is 3-hydroxyacyl-[acyl-carrier-protein] dehydratase FabZ.